The sequence spans 34 residues: Photosystem I reaction center subunit XII (34 aa).

Residues 9-29 (LIILGLIVVMHAGVLALRLGI) traverse the membrane as a helical segment.

The protein belongs to the PsaM family.

It localises to the cellular thylakoid membrane. The polypeptide is Photosystem I reaction center subunit XII (Prochlorococcus marinus subsp. pastoris (strain CCMP1986 / NIES-2087 / MED4)).